Consider the following 257-residue polypeptide: Imidazole glycerol phosphate synthase subunit HisF (257 aa).

Catalysis depends on residues aspartate 11 and aspartate 130.

It belongs to the HisA/HisF family. Heterodimer of HisH and HisF.

The protein localises to the cytoplasm. It carries out the reaction 5-[(5-phospho-1-deoxy-D-ribulos-1-ylimino)methylamino]-1-(5-phospho-beta-D-ribosyl)imidazole-4-carboxamide + L-glutamine = D-erythro-1-(imidazol-4-yl)glycerol 3-phosphate + 5-amino-1-(5-phospho-beta-D-ribosyl)imidazole-4-carboxamide + L-glutamate + H(+). Its pathway is amino-acid biosynthesis; L-histidine biosynthesis; L-histidine from 5-phospho-alpha-D-ribose 1-diphosphate: step 5/9. In terms of biological role, IGPS catalyzes the conversion of PRFAR and glutamine to IGP, AICAR and glutamate. The HisF subunit catalyzes the cyclization activity that produces IGP and AICAR from PRFAR using the ammonia provided by the HisH subunit. This chain is Imidazole glycerol phosphate synthase subunit HisF, found in Bradyrhizobium diazoefficiens (strain JCM 10833 / BCRC 13528 / IAM 13628 / NBRC 14792 / USDA 110).